A 299-amino-acid polypeptide reads, in one-letter code: ATP phosphoribosyltransferase (299 aa).

The protein belongs to the ATP phosphoribosyltransferase family. Long subfamily. The cofactor is Mg(2+).

The protein localises to the cytoplasm. The catalysed reaction is 1-(5-phospho-beta-D-ribosyl)-ATP + diphosphate = 5-phospho-alpha-D-ribose 1-diphosphate + ATP. It participates in amino-acid biosynthesis; L-histidine biosynthesis; L-histidine from 5-phospho-alpha-D-ribose 1-diphosphate: step 1/9. With respect to regulation, feedback inhibited by histidine. Functionally, catalyzes the condensation of ATP and 5-phosphoribose 1-diphosphate to form N'-(5'-phosphoribosyl)-ATP (PR-ATP). Has a crucial role in the pathway because the rate of histidine biosynthesis seems to be controlled primarily by regulation of HisG enzymatic activity. The chain is ATP phosphoribosyltransferase from Shewanella oneidensis (strain ATCC 700550 / JCM 31522 / CIP 106686 / LMG 19005 / NCIMB 14063 / MR-1).